We begin with the raw amino-acid sequence, 673 residues long: Metal-nicotianamine transporter YSL1 (673 aa).

The span at 1–13 (MEIEQRRIMKREG) shows a compositional bias: basic and acidic residues. A disordered region spans residues 1–39 (MEIEQRRIMKREGEEEEDNNQLSLQEEEPDTEEEMSGRT). Acidic residues predominate over residues 14 to 34 (EEEEDNNQLSLQEEEPDTEEE). The next 16 membrane-spanning stretches (helical) occupy residues 46-66 (QITV…SVIA), 71-91 (LTTG…FVFV), 119-139 (SAVA…LLGL), 163-183 (GLGW…FVLI), 225-245 (FMKY…FSGI), 260-280 (AWKQ…GMIC), 283-303 (LVNL…WPLL), 328-348 (VFLS…KILF), 392-412 (FAVS…PLIF), 420-440 (VIVA…GAGL), 442-462 (DINM…AVTG), 467-487 (VVAG…SCIL), 510-530 (IGTV…YKAF), 558-578 (FSAL…FAVL), 604-624 (FLVG…VFVW), and 642-662 (GLIC…LAGV).

It belongs to the YSL (TC 2.A.67.2) family. In terms of tissue distribution, low levels of expression in leaves and shoots, but not detected in roots. Restricted to the vasculature, in the xylem parenchyma surrounding xylem tubes. Expressed in pollen grains, in the vasculature of petals and sepals, in the carpel veins, in the style underneath the stigmatic papillae, in the vascular tissue of the funiculus and in the chalazal endosperm.

Its subcellular location is the membrane. In terms of biological role, involved in iron loading of the seeds. Acts probably as a transporter of iron- and metal-nicotianamine chelates. This chain is Metal-nicotianamine transporter YSL1 (YSL1), found in Arabidopsis thaliana (Mouse-ear cress).